A 452-amino-acid polypeptide reads, in one-letter code: Probable 1,4-beta-D-glucan cellobiohydrolase A (452 aa).

Residues 1-17 (MHQRALLFSALAVAANA) form the signal peptide. Asparagine 81 carries N-linked (GlcNAc...) asparagine glycosylation. The active-site Nucleophile is glutamate 226. The active-site Proton donor is the glutamate 231. An N-linked (GlcNAc...) asparagine glycan is attached at asparagine 284. Positions 406–432 (DPSKPGVARGTCEHGAGDPEKVESQHP) are disordered. A compositionally biased stretch (basic and acidic residues) spans 416–431 (TCEHGAGDPEKVESQH).

The protein belongs to the glycosyl hydrolase 7 (cellulase C) family.

Its subcellular location is the secreted. It carries out the reaction Hydrolysis of (1-&gt;4)-beta-D-glucosidic linkages in cellulose and cellotetraose, releasing cellobiose from the non-reducing ends of the chains.. In terms of biological role, the biological conversion of cellulose to glucose generally requires three types of hydrolytic enzymes: (1) Endoglucanases which cut internal beta-1,4-glucosidic bonds; (2) Exocellobiohydrolases that cut the disaccharide cellobiose from the non-reducing end of the cellulose polymer chain; (3) Beta-1,4-glucosidases which hydrolyze the cellobiose and other short cello-oligosaccharides to glucose. The polypeptide is Probable 1,4-beta-D-glucan cellobiohydrolase A (cbhA) (Neosartorya fischeri (strain ATCC 1020 / DSM 3700 / CBS 544.65 / FGSC A1164 / JCM 1740 / NRRL 181 / WB 181) (Aspergillus fischerianus)).